Consider the following 302-residue polypeptide: Putative S-adenosyl-L-methionine-dependent methyltransferase MAV_2803 (302 aa).

S-adenosyl-L-methionine-binding positions include Asp129 and 158–159; that span reads DL.

The protein belongs to the UPF0677 family.

In terms of biological role, exhibits S-adenosyl-L-methionine-dependent methyltransferase activity. In Mycobacterium avium (strain 104), this protein is Putative S-adenosyl-L-methionine-dependent methyltransferase MAV_2803.